The chain runs to 304 residues: tRNA dimethylallyltransferase (304 aa).

2–9 (GPTASGKT) contacts ATP. 4 to 9 (TASGKT) is a substrate binding site. Interaction with substrate tRNA regions lie at residues 27-30 (DSAL), 151-155 (QRINR), 232-237 (RCVGYR), and 265-272 (KRQITWLR).

This sequence belongs to the IPP transferase family. In terms of assembly, monomer. The cofactor is Mg(2+).

The catalysed reaction is adenosine(37) in tRNA + dimethylallyl diphosphate = N(6)-dimethylallyladenosine(37) in tRNA + diphosphate. Its function is as follows. Catalyzes the transfer of a dimethylallyl group onto the adenine at position 37 in tRNAs that read codons beginning with uridine, leading to the formation of N6-(dimethylallyl)adenosine (i(6)A). The sequence is that of tRNA dimethylallyltransferase from Actinobacillus pleuropneumoniae serotype 5b (strain L20).